Reading from the N-terminus, the 72-residue chain is SRY-related protein ADW4 (72 aa).

Residues 1–69 (VKRPMNAFMV…KHMADYPNYK (69 aa)) constitute a DNA-binding region (HMG box).

It is found in the nucleus. The polypeptide is SRY-related protein ADW4 (Alligator mississippiensis (American alligator)).